A 384-amino-acid chain; its full sequence is Putative F-box/kelch-repeat protein At3g27910 (384 aa).

The 53-residue stretch at 27–79 folds into the F-box domain; the sequence is SPTSLPLPDEIIVNCFAYIPRCDYPSLSLVSKTFNRLITSIELNIVRSLFQRT. Kelch repeat units follow at residues 138–184, 185–235, 237–274, and 275–323; these read KIYV…IVDG, KIYV…VMNK, IYIM…VIDN, and MLYT…MANH.

This is Putative F-box/kelch-repeat protein At3g27910 from Arabidopsis thaliana (Mouse-ear cress).